A 318-amino-acid polypeptide reads, in one-letter code: Nuclear egress protein 1 (318 aa).

A CCCH-type zinc finger spans residues 129–239; the sequence is CLRLSPFGHS…HLLLQGTSLH (111 aa).

The protein belongs to the herpesviridae NEC1 protein family. Forms a heterodimeric viral nuclear egress complex (NEC) with NEC2. Interacts with capsid vertex specific component 2/CVC2; this interaction directs the capsid to the host inner nuclear membrane to initiate budding. In terms of processing, phosphorylated at serine residues in the N-terminus. This phosphorylation regulates the localization within the inner nuclear membrane.

It localises to the host nucleus inner membrane. In terms of biological role, plays an essential role in virion nuclear egress, the first step of virion release from infected cell. Within the host nucleus, NEC1 interacts with the newly formed capsid through the vertexes and directs it to the inner nuclear membrane by associating with NEC2. Induces the budding of the capsid at the inner nuclear membrane as well as its envelopment into the perinuclear space. There, the NEC1/NEC2 complex promotes the fusion of the enveloped capsid with the outer nuclear membrane and the subsequent release of the viral capsid into the cytoplasm where it will reach the secondary budding sites in the host Golgi or trans-Golgi network. The sequence is that of Nuclear egress protein 1 from Homo sapiens (Human).